The primary structure comprises 498 residues: Glycerol kinase (498 aa).

ADP is bound at residue T14. The ATP site is built by T14, T15, and S16. Position 14 (T14) interacts with sn-glycerol 3-phosphate. R18 serves as a coordination point for ADP. Positions 84, 85, and 136 each coordinate sn-glycerol 3-phosphate. Glycerol-binding residues include R84, E85, and Y136. H232 carries the phosphohistidine; by HPr modification. Residue D246 participates in sn-glycerol 3-phosphate binding. 2 residues coordinate glycerol: D246 and Q247. ADP contacts are provided by T268 and G311. Residues T268, G311, Q315, and G412 each coordinate ATP. G412 and N416 together coordinate ADP.

It belongs to the FGGY kinase family. Homotetramer and homodimer (in equilibrium). The phosphoenolpyruvate-dependent sugar phosphotransferase system (PTS), including enzyme I, and histidine-containing protein (HPr) are required for the phosphorylation, which leads to the activation of the enzyme.

It catalyses the reaction glycerol + ATP = sn-glycerol 3-phosphate + ADP + H(+). Its pathway is polyol metabolism; glycerol degradation via glycerol kinase pathway; sn-glycerol 3-phosphate from glycerol: step 1/1. With respect to regulation, activated by phosphorylation and inhibited by fructose 1,6-bisphosphate (FBP). Functionally, key enzyme in the regulation of glycerol uptake and metabolism. Catalyzes the phosphorylation of glycerol to yield sn-glycerol 3-phosphate. In Lactococcus lactis subsp. lactis (strain IL1403) (Streptococcus lactis), this protein is Glycerol kinase.